The chain runs to 181 residues: Ferredoxin C 2, chloroplastic (181 aa).

The transit peptide at 1–44 directs the protein to the chloroplast; sequence MALILPCTFCTSLQKKNFPINRRYITNFRRGATTATCEFRIPVE. Residues 59-151 enclose the 2Fe-2S ferredoxin-type domain; it reads HKVTVHDRQR…DLEVETQDED (93 aa). Residues Cys-97, Cys-102, Cys-105, and Cys-135 each contribute to the [2Fe-2S] cluster site.

The protein belongs to the 2Fe2S plant-type ferredoxin family. Requires [2Fe-2S] cluster as cofactor.

It is found in the plastid. Its subcellular location is the chloroplast. In terms of biological role, ferredoxins are iron-sulfur proteins that transfer electrons in a wide variety of metabolic reactions. Mediates alternative electron partitioning in conditions of acceptor limitation at photosystem I. The polypeptide is Ferredoxin C 2, chloroplastic (Arabidopsis thaliana (Mouse-ear cress)).